Consider the following 485-residue polypeptide: Catalase isozyme 1 (485 aa).

Residues His58 and Asn131 contribute to the active site. Tyr341 serves as a coordination point for heme.

It belongs to the catalase family. Homotetramer. Heme is required as a cofactor.

It is found in the peroxisome. It catalyses the reaction 2 H2O2 = O2 + 2 H2O. Its function is as follows. Occurs in almost all aerobically respiring organisms and serves to protect cells from the toxic effects of hydrogen peroxide. The protein is Catalase isozyme 1 (CAT1) of Nicotiana plumbaginifolia (Leadwort-leaved tobacco).